The following is a 547-amino-acid chain: Chaperonin GroEL (547 aa).

Residues 30–33 (TLGP), Lys51, 87–91 (DGTTT), Gly415, and Asp495 each bind ATP.

Belongs to the chaperonin (HSP60) family. Forms a cylinder of 14 subunits composed of two heptameric rings stacked back-to-back. Interacts with the co-chaperonin GroES.

Its subcellular location is the cytoplasm. The enzyme catalyses ATP + H2O + a folded polypeptide = ADP + phosphate + an unfolded polypeptide.. In terms of biological role, together with its co-chaperonin GroES, plays an essential role in assisting protein folding. The GroEL-GroES system forms a nano-cage that allows encapsulation of the non-native substrate proteins and provides a physical environment optimized to promote and accelerate protein folding. The sequence is that of Chaperonin GroEL from Aggregatibacter actinomycetemcomitans (Actinobacillus actinomycetemcomitans).